A 1527-amino-acid polypeptide reads, in one-letter code: ATP-binding cassette sub-family C member 3 (1527 aa).

The Extracellular segment spans residues 1–32 (MDALCGSGELGSKFWDSNLSVHTENPDLTPCF). The N-linked (GlcNAc...) asparagine glycan is linked to Asn-18. A helical membrane pass occupies residues 33–53 (QNSLLAWVPCIYLWVALPCYL). Over 54–73 (LYLRHHCRGYIILSHLSKLK) the chain is Cytoplasmic. The helical transmembrane segment at 74–94 (MVLGVLLWCVSWADLFYSFHG) threads the bilayer. Residues 95–99 (LVHGR) lie on the Extracellular side of the membrane. The chain crosses the membrane as a helical span at residues 100–120 (APAPVFFVTPLVVGVTMLLAT). Topologically, residues 121-132 (LLIQYERLQGVQ) are cytoplasmic. Residues 133 to 153 (SSGVLIIFWFLCVVCAIVPFR) traverse the membrane as a helical segment. At 154–171 (SKILLAKAEGEISDPFRF) the chain is on the extracellular side. A helical membrane pass occupies residues 172 to 192 (TTFYIHFALVLSALILACFRE). Residues 193-302 (KPPFFSAKNV…RPRKPSFLKA (110 aa)) are Cytoplasmic-facing. Residues 303 to 323 (LLATFGSSFLISACFKLIQDL) form a helical membrane-spanning segment. One can recognise an ABC transmembrane type-1 1 domain in the interval 311–594 (FLISACFKLI…LPQLISNLTQ (284 aa)). Residues 324–349 (LSFINPQLLSILIRFISNPMAPSWWG) lie on the Extracellular side of the membrane. A helical transmembrane segment spans residues 350–370 (FLVAGLMFLCSMMQSLILQHY). Topologically, residues 371–426 (YHYIFVTGVKFRTGIMGVIYRKALVITNSVKRASTVGEIVNLMSVDAQRFMDLAPF) are cytoplasmic. Residues 427–447 (LNLLWSAPLQIILAIYFLWQN) form a helical membrane-spanning segment. Residues 448 to 450 (LGP) lie on the Extracellular side of the membrane. A helical transmembrane segment spans residues 451–471 (SVLAGVAFMVLLIPLNGAVAV). The Cytoplasmic portion of the chain corresponds to 472 to 533 (KMRAFQVKQM…LLRTAAYLHT (62 aa)). Residues 534–554 (TTTFTWMCSPFLVTLITLWVY) traverse the membrane as a helical segment. Topologically, residues 555–576 (VYVDPNNVLDAEKAFVSVSLFN) are extracellular. A helical transmembrane segment spans residues 577-597 (ILRLPLNMLPQLISNLTQASV). At 598-963 (SLKRIQQFLS…VELSVFWDYA (366 aa)) the chain is on the cytoplasmic side. The ABC transporter 1 domain maps to 629-851 (IHSGTFTWAQ…NGSFANFLCN (223 aa)). ATP is bound at residue 661 to 668 (GPVGCGKS). 2 positions are modified to phosphoserine: Ser-908 and Ser-911. Positions 910 to 932 (LSSDGEGQGRPVPRRHLGPSEKV) are disordered. A helical membrane pass occupies residues 964 to 984 (KAVGLCTTLAICLLYVGQSAA). An ABC transmembrane type-1 2 domain is found at 971–1252 (TLAICLLYVG…MIRMMSDLES (282 aa)). The Extracellular segment spans residues 985-1021 (AIGANVWLSAWTNDAMADSRQNNTSLRLGVYAALGIL). Residues Asn-1006 and Asn-1007 are each glycosylated (N-linked (GlcNAc...) asparagine). The helical transmembrane segment at 1022 to 1042 (QGFLVMLAAMAMAAGGIQAAR) threads the bilayer. The Cytoplasmic portion of the chain corresponds to 1043-1085 (VLHQALLHNKIRSPQSFFDTTPSGRILNCFSKDIYVVDEVLAP). Residues 1086-1106 (VILMLLNSFFNAISTLVVIMA) form a helical membrane-spanning segment. Residue Ser-1107 is a topological domain, extracellular. Residues 1108 to 1128 (TPLFTVVILPLAVLYTLVQRF) form a helical membrane-spanning segment. Topologically, residues 1129–1199 (YAATSRQLKR…ISNRWLSIGV (71 aa)) are cytoplasmic. A helical transmembrane segment spans residues 1200 to 1220 (EFVGNCVVLFAALFAVIGRSS). Over 1221-1222 (LN) the chain is Extracellular. Residues 1223 to 1243 (PGLVGLSVSYSLQVTFALNWM) traverse the membrane as a helical segment. The Cytoplasmic portion of the chain corresponds to 1244-1527 (IRMMSDLESN…YGMARDAGLA (284 aa)). An ABC transporter 2 domain is found at 1291–1523 (FRNYSVRYRP…RGIFYGMARD (233 aa)). 1323 to 1330 (GRTGAGKS) is a binding site for ATP.

The protein belongs to the ABC transporter superfamily. ABCC family. Conjugate transporter (TC 3.A.1.208) subfamily. As to expression, mainly expressed in the liver. Also expressed in small intestine, colon, prostate, testis, brain and at a lower level in the kidney. In testis, localized to peritubular myoid cells, Leydig cells, along the basal membrane of Sertoli cells and moderately in the adluminal compartment of the seminiferous tubules.

It is found in the basolateral cell membrane. Its subcellular location is the basal cell membrane. It catalyses the reaction taurocholate(in) + ATP + H2O = taurocholate(out) + ADP + phosphate + H(+). The catalysed reaction is glycocholate(in) + ATP + H2O = glycocholate(out) + ADP + phosphate + H(+). The enzyme catalyses taurolithocholate 3-sulfate(in) + ATP + H2O = taurolithocholate 3-sulfate(out) + ADP + phosphate + H(+). It carries out the reaction taurochenodeoxycholate 3-sulfate(in) + ATP + H2O = taurochenodeoxycholate 3-sulfate(out) + ADP + phosphate + H(+). It catalyses the reaction an S-substituted glutathione(in) + ATP + H2O = an S-substituted glutathione(out) + ADP + phosphate + H(+). The catalysed reaction is ATP + H2O + xenobioticSide 1 = ADP + phosphate + xenobioticSide 2.. The enzyme catalyses 17beta-estradiol 17-O-(beta-D-glucuronate)(in) + ATP + H2O = 17beta-estradiol 17-O-(beta-D-glucuronate)(out) + ADP + phosphate + H(+). It carries out the reaction dehydroepiandrosterone 3-sulfate(in) + ATP + H2O = dehydroepiandrosterone 3-sulfate(out) + ADP + phosphate + H(+). It catalyses the reaction leukotriene C4(in) + ATP + H2O = leukotriene C4(out) + ADP + phosphate + H(+). The catalysed reaction is (4Z,15Z)-bilirubin IXalpha C8-beta-D-glucuronoside(in) + ATP + H2O = (4Z,15Z)-bilirubin IXalpha C8-beta-D-glucuronoside(out) + ADP + phosphate + H(+). The enzyme catalyses (4Z,15Z)-bilirubin IXalpha C8,C12-beta-D-bisglucuronoside(in) + ATP + H2O = (4Z,15Z)-bilirubin IXalpha C8,C12-beta-D-bisglucuronoside(out) + ADP + phosphate + H(+). Its function is as follows. ATP-dependent transporter of the ATP-binding cassette (ABC) family that binds and hydrolyzes ATP to enable active transport of various substrates including many drugs, toxicants and endogenous compound across cell membranes. Transports glucuronide conjugates such as bilirubin diglucuronide, estradiol-17-beta-o-glucuronide and GSH conjugates such as leukotriene C4 (LTC4). Transports also various bile salts (taurocholate, glycocholate, taurochenodeoxycholate-3-sulfate, taurolithocholate- 3-sulfate). Does not contribute substantially to bile salt physiology but provides an alternative route for the export of bile acids and glucuronides from cholestatic hepatocytes. May contribute to regulate the transport of organic compounds in testes across the blood-testis-barrier. Can confer resistance to various anticancer drugs, methotrexate, tenoposide and etoposide, by decreasing accumulation of these drugs in cells. This is ATP-binding cassette sub-family C member 3 from Homo sapiens (Human).